We begin with the raw amino-acid sequence, 444 residues long: Probable glycine dehydrogenase (decarboxylating) subunit 1 (444 aa).

The protein belongs to the GcvP family. N-terminal subunit subfamily. As to quaternary structure, the glycine cleavage system is composed of four proteins: P, T, L and H. In this organism, the P 'protein' is a heterodimer of two subunits.

The enzyme catalyses N(6)-[(R)-lipoyl]-L-lysyl-[glycine-cleavage complex H protein] + glycine + H(+) = N(6)-[(R)-S(8)-aminomethyldihydrolipoyl]-L-lysyl-[glycine-cleavage complex H protein] + CO2. Functionally, the glycine cleavage system catalyzes the degradation of glycine. The P protein binds the alpha-amino group of glycine through its pyridoxal phosphate cofactor; CO(2) is released and the remaining methylamine moiety is then transferred to the lipoamide cofactor of the H protein. The sequence is that of Probable glycine dehydrogenase (decarboxylating) subunit 1 from Moorella thermoacetica (strain ATCC 39073 / JCM 9320).